Consider the following 366-residue polypeptide: Galactoside alpha-(1,2)-fucosyltransferase 1 (366 aa).

The Cytoplasmic portion of the chain corresponds to 1–8 (MWPRSHRH). Residues 9–25 (LCLAFLLVCVLSAISFL) form a helical; Signal-anchor for type II membrane protein membrane-spanning segment. Residues 26–366 (IHFHQDSIRH…LSPLWPLAEP (341 aa)) are Lumenal-facing. N-linked (GlcNAc...) asparagine glycans are attached at residues asparagine 66, asparagine 302, and asparagine 328.

Belongs to the glycosyltransferase 11 family.

It is found in the golgi apparatus. The protein localises to the golgi stack membrane. It carries out the reaction a beta-D-galactosyl-(1-&gt;4)-N-acetyl-beta-D-glucosaminyl derivative + GDP-beta-L-fucose = an alpha-L-Fuc-(1-&gt;2)-beta-D-Gal-(1-&gt;4)-beta-D-GlcNAc derivative + GDP + H(+). It catalyses the reaction a ganglioside GA1 + GDP-beta-L-fucose = a ganglioside Fuc-GA1 + GDP + H(+). The enzyme catalyses a beta-D-Gal-(1-&gt;3)-beta-D-GlcNAc-(1-&gt;3)-beta-D-Gal-(1-&gt;4)-beta-D-Glc-(1&lt;-&gt;1')-Cer(d18:1(4E)) + GDP-beta-L-fucose = alpha-L-fucosyl-(1-&gt;2)- beta-D-galactosyl-(1-&gt;3)-N-acetyl-beta-D-glucosaminyl-(1-&gt;3)-beta-D-galactosyl-(1-&gt;4)-beta-D-glucosyl-(1&lt;-&gt;1')-N-acylsphing-4-enine + GDP + H(+). The catalysed reaction is a neolactoside nLc4Cer(d18:1(4E)) + GDP-beta-L-fucose = a neolactoside IV(2)-alpha-Fuc-nLc4Cer(d18:1(4E)) + GDP + H(+). It carries out the reaction a ganglioside GM1 + GDP-beta-L-fucose = a ganglioside Fuc-GM1 + GDP + H(+). It catalyses the reaction beta-D-galactosyl-(1-&gt;3)-N-acetyl-D-galactosamine + GDP-beta-L-fucose = alpha-L-fucosyl-(1-&gt;2)-beta-D-galactosyl-(1-&gt;3)-N-acetyl-D-galactosamine + GDP + H(+). The protein operates within protein modification; protein glycosylation. Its function is as follows. Catalyzes the transfer of L-fucose, from a guanosine diphosphate-beta-L-fucose, to the terminal galactose residue of glycoconjugates through an alpha(1,2) linkage leading to H antigen synthesis that is an intermediate substrate in the synthesis of ABO blood group antigens. H antigen is essential for maturation of the glomerular layer of the main olfactory bulb, in cell migration and early cell-cell contacts during tumor associated angiogenesis. Preferentially fucosylates soluble lactose and to a lesser extent fucosylates glycolipids gangliosides GA1 and GM1a. In Saimiri sciureus (Common squirrel monkey), this protein is Galactoside alpha-(1,2)-fucosyltransferase 1.